The primary structure comprises 266 residues: Gasdermin bGSDM (266 aa).

A run of 4 beta stranded transmembrane segments spans residues F65–L81, E93–E113, Q162–V181, and A187–T203. Residues G248 to L266 are C-terminal region.

Belongs to the bacterial gasdermin family. In terms of assembly, monomer. As to quaternary structure, forms large, homooligomeric ring-shaped pores when inserted in membranes.

It localises to the cytoplasm. Its subcellular location is the cell membrane. Its activity is regulated as follows. The full-length protein before cleavage is inactive: intramolecular interactions between the N-terminal domain and the C-terminal region mediate autoinhibition. The pyroptosis-like-inducing activity is carried by the released N-terminal domain (Gasdermin bGSDM, N-terminus). Functionally, precursor of a pore-forming protein involved in defense against bacteriophages. Cleavage of this precursor by its dedicated protease releases the active moiety (gasdermin bGSDM, N-terminus) which inserts into membranes, forming pores and triggering cell death. Expression of bGSDM and the neighboring protease gene (Ga0307981_100051430) is highly toxic in E.coli. Pore-forming protein that causes membrane permeabilization via a pyroptosis-like activity. This is the active form which makes ring-like pores with an interior pore diameter of 130-190 Angstroms, when integrated in liposomes. This chain is Gasdermin bGSDM, found in Unknown prokaryotic organism.